The primary structure comprises 444 residues: Trimethylamine monooxygenase (444 aa).

The FAD site is built by cysteine 12, glutamate 37, glutamine 39, leucine 45, and tryptophan 46. Tryptophan 70 and asparagine 72 together coordinate NADP(+). FAD is bound by residues asparagine 72 and valine 125. The NADP(+) site is built by tyrosine 170, serine 202, serine 203, serine 205, arginine 226, histidine 227, and asparagine 288. The FAD site is built by glutamine 315 and threonine 318. Residue arginine 409 participates in NADP(+) binding.

This sequence belongs to the FMO family. Homodimer. The cofactor is FAD.

It catalyses the reaction trimethylamine + NADPH + O2 = trimethylamine N-oxide + NADP(+) + H2O. In terms of biological role, catalyzes the oxidation of trimethylamine (TMA) to produce trimethylamine N-oxide (TMAO). In vitro, has a broad substrate specificity, oxidizing many nitrogen- and sulfur-containing compounds, including dimethylamine (DMA), dimethylsulfide (DMS), dimethylsulfoxide (DMSO) and methimazole. TMA shows the highest affinity. This is Trimethylamine monooxygenase from Pelagibacter sp. (strain HTCC7211).